The following is a 189-amino-acid chain: dCTP deaminase, dUMP-forming (189 aa).

DCTP contacts are provided by residues 101–106 (KSSLGR), D119, 127–129 (TLE), Q148, Y162, K170, and Q174. E129 acts as the Proton donor/acceptor in catalysis. Positions 163 to 189 (GSGKLGSKYQGQRGPTPSKAYLNFPNK) are disordered.

The protein belongs to the dCTP deaminase family. Homotrimer.

It carries out the reaction dCTP + 2 H2O = dUMP + NH4(+) + diphosphate. Its pathway is pyrimidine metabolism; dUMP biosynthesis; dUMP from dCTP: step 1/1. Bifunctional enzyme that catalyzes both the deamination of dCTP to dUTP and the hydrolysis of dUTP to dUMP without releasing the toxic dUTP intermediate. The protein is dCTP deaminase, dUMP-forming of Corynebacterium glutamicum (strain R).